A 536-amino-acid chain; its full sequence is Chaperonin GroEL (536 aa).

Residues 30–33 (TLGP), 86–90 (DGTTT), glycine 414, and aspartate 494 each bind ATP.

The protein belongs to the chaperonin (HSP60) family. As to quaternary structure, forms a cylinder of 14 subunits composed of two heptameric rings stacked back-to-back. Interacts with the co-chaperonin GroES.

The protein resides in the cytoplasm. The enzyme catalyses ATP + H2O + a folded polypeptide = ADP + phosphate + an unfolded polypeptide.. Functionally, together with its co-chaperonin GroES, plays an essential role in assisting protein folding. The GroEL-GroES system forms a nano-cage that allows encapsulation of the non-native substrate proteins and provides a physical environment optimized to promote and accelerate protein folding. The protein is Chaperonin GroEL of Methanospirillum hungatei JF-1 (strain ATCC 27890 / DSM 864 / NBRC 100397 / JF-1).